A 311-amino-acid polypeptide reads, in one-letter code: Putative dihydroorotate dehydrogenase A (fumarate) (311 aa).

Substrate is bound by residues lysine 45, 69–73 (NSMGL), and asparagine 128. 45–46 (KT) contributes to the FMN binding site. Position 128 (asparagine 128) interacts with FMN. The active-site Nucleophile is cysteine 131. Lysine 165 and valine 193 together coordinate FMN. Residue 194–195 (NS) participates in substrate binding. FMN-binding positions include glycine 220, 248–249 (GG), and 270–271 (GT).

The protein belongs to the dihydroorotate dehydrogenase family. Type 1 subfamily. Homodimer. FMN is required as a cofactor.

The protein resides in the cytoplasm. It catalyses the reaction (S)-dihydroorotate + fumarate = orotate + succinate. It functions in the pathway pyrimidine metabolism; UMP biosynthesis via de novo pathway. Catalyzes the conversion of dihydroorotate to orotate with fumarate as the electron acceptor. This Streptococcus pyogenes serotype M1 protein is Putative dihydroorotate dehydrogenase A (fumarate) (pyrD).